We begin with the raw amino-acid sequence, 102 residues long: Small ribosomal subunit protein uS10 (102 aa).

The protein belongs to the universal ribosomal protein uS10 family. Part of the 30S ribosomal subunit.

Functionally, involved in the binding of tRNA to the ribosomes. In Streptococcus uberis (strain ATCC BAA-854 / 0140J), this protein is Small ribosomal subunit protein uS10.